The chain runs to 45 residues: Large ribosomal subunit protein bL34 (45 aa).

A disordered region spans residues 1–45 (MTKRTFGGTSRKRKRVSGFRVRMRSHTGRRVIKSRRKRGRDRIAV). Residues 10–45 (SRKRKRVSGFRVRMRSHTGRRVIKSRRKRGRDRIAV) are compositionally biased toward basic residues.

The protein belongs to the bacterial ribosomal protein bL34 family.

This Prochlorococcus marinus (strain MIT 9515) protein is Large ribosomal subunit protein bL34.